Consider the following 250-residue polypeptide: Leucyl/phenylalanyl-tRNA--protein transferase (250 aa).

The protein belongs to the L/F-transferase family.

Its subcellular location is the cytoplasm. The enzyme catalyses N-terminal L-lysyl-[protein] + L-leucyl-tRNA(Leu) = N-terminal L-leucyl-L-lysyl-[protein] + tRNA(Leu) + H(+). It carries out the reaction N-terminal L-arginyl-[protein] + L-leucyl-tRNA(Leu) = N-terminal L-leucyl-L-arginyl-[protein] + tRNA(Leu) + H(+). The catalysed reaction is L-phenylalanyl-tRNA(Phe) + an N-terminal L-alpha-aminoacyl-[protein] = an N-terminal L-phenylalanyl-L-alpha-aminoacyl-[protein] + tRNA(Phe). Functionally, functions in the N-end rule pathway of protein degradation where it conjugates Leu, Phe and, less efficiently, Met from aminoacyl-tRNAs to the N-termini of proteins containing an N-terminal arginine or lysine. The protein is Leucyl/phenylalanyl-tRNA--protein transferase of Cupriavidus necator (strain ATCC 17699 / DSM 428 / KCTC 22496 / NCIMB 10442 / H16 / Stanier 337) (Ralstonia eutropha).